The sequence spans 130 residues: Small ribosomal subunit protein uS8 (130 aa).

This sequence belongs to the universal ribosomal protein uS8 family. As to quaternary structure, component of the 40S ribosomal subunit. Part of the small subunit (SSU) processome, composed of more than 70 proteins and the RNA chaperone small nucleolar RNA (snoRNA) U3.

It localises to the cytoplasm. Its subcellular location is the nucleus. It is found in the nucleolus. Functionally, component of the small ribosomal subunit. Part of the small subunit (SSU) processome, first precursor of the small eukaryotic ribosomal subunit. During the assembly of the SSU processome in the nucleolus, many ribosome biogenesis factors, an RNA chaperone and ribosomal proteins associate with the nascent pre-rRNA and work in concert to generate RNA folding, modifications, rearrangements and cleavage as well as targeted degradation of pre-ribosomal RNA by the RNA exosome. Required for erythropoiesis during embryonic development. The polypeptide is Small ribosomal subunit protein uS8 (Danio rerio (Zebrafish)).